A 446-amino-acid polypeptide reads, in one-letter code: N-succinylarginine dihydrolase (446 aa).

Residues 19–28 (AGLSYGNVAS), asparagine 110, and 137–138 (HR) each bind substrate. Glutamate 174 is an active-site residue. Arginine 214 lines the substrate pocket. Histidine 250 is an active-site residue. Positions 252 and 363 each coordinate substrate. Catalysis depends on cysteine 369, which acts as the Nucleophile.

The protein belongs to the succinylarginine dihydrolase family. In terms of assembly, homodimer.

The enzyme catalyses N(2)-succinyl-L-arginine + 2 H2O + 2 H(+) = N(2)-succinyl-L-ornithine + 2 NH4(+) + CO2. It participates in amino-acid degradation; L-arginine degradation via AST pathway; L-glutamate and succinate from L-arginine: step 2/5. In terms of biological role, catalyzes the hydrolysis of N(2)-succinylarginine into N(2)-succinylornithine, ammonia and CO(2). This Pseudoalteromonas atlantica (strain T6c / ATCC BAA-1087) protein is N-succinylarginine dihydrolase.